Reading from the N-terminus, the 158-residue chain is Small ribosomal subunit protein uS9 (158 aa).

It belongs to the universal ribosomal protein uS9 family.

The sequence is that of Small ribosomal subunit protein uS9 from Brucella abortus (strain S19).